A 449-amino-acid chain; its full sequence is Phosphoglucosamine mutase (449 aa).

Residue serine 99 is the Phosphoserine intermediate of the active site. Positions 99, 239, 241, and 243 each coordinate Mg(2+). A Phosphoserine modification is found at serine 99.

It belongs to the phosphohexose mutase family. Mg(2+) is required as a cofactor. Post-translationally, activated by phosphorylation.

It catalyses the reaction alpha-D-glucosamine 1-phosphate = D-glucosamine 6-phosphate. Catalyzes the conversion of glucosamine-6-phosphate to glucosamine-1-phosphate. The chain is Phosphoglucosamine mutase from Finegoldia magna (strain ATCC 29328 / DSM 20472 / WAL 2508) (Peptostreptococcus magnus).